The sequence spans 359 residues: S-adenosylmethionine:tRNA ribosyltransferase-isomerase (359 aa).

It belongs to the QueA family. In terms of assembly, monomer.

Its subcellular location is the cytoplasm. The catalysed reaction is 7-aminomethyl-7-carbaguanosine(34) in tRNA + S-adenosyl-L-methionine = epoxyqueuosine(34) in tRNA + adenine + L-methionine + 2 H(+). Its pathway is tRNA modification; tRNA-queuosine biosynthesis. Transfers and isomerizes the ribose moiety from AdoMet to the 7-aminomethyl group of 7-deazaguanine (preQ1-tRNA) to give epoxyqueuosine (oQ-tRNA). In Synechococcus sp. (strain ATCC 27144 / PCC 6301 / SAUG 1402/1) (Anacystis nidulans), this protein is S-adenosylmethionine:tRNA ribosyltransferase-isomerase.